Consider the following 370-residue polypeptide: Putative agmatine deiminase (370 aa).

Cys-361 (amidino-cysteine intermediate) is an active-site residue.

The protein belongs to the agmatine deiminase family.

The enzyme catalyses agmatine + H2O = N-carbamoylputrescine + NH4(+). The protein is Putative agmatine deiminase of Shewanella sp. (strain MR-7).